A 119-amino-acid chain; its full sequence is Multi-drug resistance efflux pump PmrA homolog (119 aa).

Helical transmembrane passes span 1–20 (ILIGLVFTFVIYLPMAFVQS), 22–42 (LQLGILRFLLGFGAGALMPSV), 64–84 (MCSNLGMVTGPLVGSAIAGYI), and 88–108 (AAIVGTSLFVIVNIIWSFINF).

The protein belongs to the major facilitator superfamily.

The protein resides in the cell membrane. This Lactococcus lactis subsp. cremoris (Streptococcus cremoris) protein is Multi-drug resistance efflux pump PmrA homolog (pmrA).